A 287-amino-acid chain; its full sequence is Glycine--tRNA ligase alpha subunit (287 aa).

It belongs to the class-II aminoacyl-tRNA synthetase family. In terms of assembly, tetramer of two alpha and two beta subunits.

Its subcellular location is the cytoplasm. The catalysed reaction is tRNA(Gly) + glycine + ATP = glycyl-tRNA(Gly) + AMP + diphosphate. This Campylobacter jejuni (strain RM1221) protein is Glycine--tRNA ligase alpha subunit.